The chain runs to 546 residues: Chaperonin GroEL (546 aa).

Residues Thr-29 to Pro-32, Lys-50, Asp-86 to Thr-90, Gly-414, Asn-477 to Ala-479, and Asp-493 each bind ATP.

Belongs to the chaperonin (HSP60) family. Forms a cylinder of 14 subunits composed of two heptameric rings stacked back-to-back. Interacts with the co-chaperonin GroES.

The protein resides in the cytoplasm. It catalyses the reaction ATP + H2O + a folded polypeptide = ADP + phosphate + an unfolded polypeptide.. Its function is as follows. Together with its co-chaperonin GroES, plays an essential role in assisting protein folding. The GroEL-GroES system forms a nano-cage that allows encapsulation of the non-native substrate proteins and provides a physical environment optimized to promote and accelerate protein folding. In Geobacter metallireducens (strain ATCC 53774 / DSM 7210 / GS-15), this protein is Chaperonin GroEL.